Consider the following 239-residue polypeptide: Isopentenyl-diphosphate Delta-isomerase (239 aa).

Lysine 43 is a substrate binding site. Residues histidine 47 and histidine 58 each coordinate Mg(2+). Residues 56–210 enclose the Nudix hydrolase domain; sequence LLHRAFSIFL…KVKVTPWFRL (155 aa). The substrate site is built by arginine 77 and lysine 81. The active site involves cysteine 93. Residue serine 94 participates in substrate binding. The Mg(2+) site is built by glutamate 156 and glutamate 158. Glutamate 158 is an active-site residue.

This sequence belongs to the IPP isomerase type 1 family. The cofactor is Mg(2+).

It carries out the reaction isopentenyl diphosphate = dimethylallyl diphosphate. It functions in the pathway isoprenoid biosynthesis; dimethylallyl diphosphate biosynthesis; dimethylallyl diphosphate from isopentenyl diphosphate: step 1/1. In terms of biological role, catalyzes the 1,3-allylic rearrangement of the homoallylic substrate isopentenyl (IPP) to its highly electrophilic allylic isomer, dimethylallyl diphosphate (DMAPP). The sequence is that of Isopentenyl-diphosphate Delta-isomerase (ipi) from Dictyostelium discoideum (Social amoeba).